The chain runs to 302 residues: NAD kinase 2 (302 aa).

Asp-78 functions as the Proton acceptor in the catalytic mechanism. NAD(+)-binding positions include 78 to 79, 152 to 153, Asp-182, 193 to 198, and Ala-217; these read DG, NE, and TAYALS.

Belongs to the NAD kinase family. Requires a divalent metal cation as cofactor.

It is found in the cytoplasm. It carries out the reaction NAD(+) + ATP = ADP + NADP(+) + H(+). Its function is as follows. Involved in the regulation of the intracellular balance of NAD and NADP, and is a key enzyme in the biosynthesis of NADP. Catalyzes specifically the phosphorylation on 2'-hydroxyl of the adenosine moiety of NAD to yield NADP. The chain is NAD kinase 2 from Prochlorococcus marinus (strain MIT 9313).